An 83-amino-acid chain; its full sequence is Kappa-theraphotoxin-Cg2b (83 aa).

A signal peptide spans 1–21 (MKGSAFAIILGLVVLCACSFA). Residues 22–53 (EDEQDQFASPNELLRSMFLESRHELIPEVEGR) constitute a propeptide that is removed on maturation. Disulfide bonds link Cys55-Cys69, Cys62-Cys74, and Cys68-Cys78.

This sequence belongs to the neurotoxin 30 (phrixotoxin) family. Expressed by the venom gland.

The protein resides in the secreted. Functionally, probable ion channel inhibitor. The polypeptide is Kappa-theraphotoxin-Cg2b (Chilobrachys guangxiensis (Chinese earth tiger tarantula)).